The primary structure comprises 217 residues: Redox-sensing transcriptional repressor Rex (217 aa).

The H-T-H motif DNA-binding region spans 17 to 56 (RYLRYVEDLLNHDVLRISSSELSQRMGYTASQVRQDFNNF). 91 to 96 (GVGNLG) serves as a coordination point for NAD(+).

Belongs to the transcriptional regulatory Rex family. Homodimer.

The protein resides in the cytoplasm. Modulates transcription in response to changes in cellular NADH/NAD(+) redox state. This is Redox-sensing transcriptional repressor Rex from Caldicellulosiruptor bescii (strain ATCC BAA-1888 / DSM 6725 / KCTC 15123 / Z-1320) (Anaerocellum thermophilum).